The primary structure comprises 308 residues: Probable GTP 3',8-cyclase (308 aa).

The region spanning 4-224 is the Radical SAM core domain; that stretch reads RFGRPLEDLR…QIRKKHFRPR (221 aa). Arg-13 is a GTP binding site. 3 residues coordinate [4Fe-4S] cluster: Cys-20, Cys-24, and Cys-27. Lys-60 lines the GTP pocket. Gly-64 serves as a coordination point for S-adenosyl-L-methionine. Residue Thr-90 participates in GTP binding. Ser-114 provides a ligand contact to S-adenosyl-L-methionine. Residue Lys-151 participates in GTP binding. 2 residues coordinate [4Fe-4S] cluster: Cys-245 and Cys-248. Position 250–252 (250–252) interacts with GTP; sequence RIR. Cys-262 contributes to the [4Fe-4S] cluster binding site.

It belongs to the radical SAM superfamily. MoaA family. Requires [4Fe-4S] cluster as cofactor.

The catalysed reaction is GTP + AH2 + S-adenosyl-L-methionine = (8S)-3',8-cyclo-7,8-dihydroguanosine 5'-triphosphate + 5'-deoxyadenosine + L-methionine + A + H(+). The protein operates within cofactor biosynthesis; molybdopterin biosynthesis. Its function is as follows. Catalyzes the cyclization of GTP to (8S)-3',8-cyclo-7,8-dihydroguanosine 5'-triphosphate. In Saccharolobus islandicus (strain Y.N.15.51 / Yellowstone #2) (Sulfolobus islandicus), this protein is Probable GTP 3',8-cyclase.